The primary structure comprises 341 residues: Anthranilate phosphoribosyltransferase (341 aa).

5-phospho-alpha-D-ribose 1-diphosphate-binding positions include Gly80, 83–84 (GD), Thr88, 90–93 (NIST), 108–116 (KHGNRAVSS), and Ser120. Anthranilate is bound at residue Gly80. Ser92 lines the Mg(2+) pocket. Asn111 is an anthranilate binding site. Arg166 contacts anthranilate. Residues Asp225 and Glu226 each coordinate Mg(2+).

The protein belongs to the anthranilate phosphoribosyltransferase family. In terms of assembly, homodimer. It depends on Mg(2+) as a cofactor.

The enzyme catalyses N-(5-phospho-beta-D-ribosyl)anthranilate + diphosphate = 5-phospho-alpha-D-ribose 1-diphosphate + anthranilate. The protein operates within amino-acid biosynthesis; L-tryptophan biosynthesis; L-tryptophan from chorismate: step 2/5. Catalyzes the transfer of the phosphoribosyl group of 5-phosphorylribose-1-pyrophosphate (PRPP) to anthranilate to yield N-(5'-phosphoribosyl)-anthranilate (PRA). The chain is Anthranilate phosphoribosyltransferase from Brevibacillus brevis (strain 47 / JCM 6285 / NBRC 100599).